Consider the following 507-residue polypeptide: Maturase K (507 aa).

It belongs to the intron maturase 2 family. MatK subfamily.

It localises to the plastid. It is found in the chloroplast. Usually encoded in the trnK tRNA gene intron. Probably assists in splicing its own and other chloroplast group II introns. This chain is Maturase K, found in Umbellularia californica (California bay laurel).